A 376-amino-acid chain; its full sequence is WD repeat-containing protein 86 (376 aa).

WD repeat units lie at residues 13 to 52, 55 to 94, 95 to 132, 135 to 188, 191 to 232, 234 to 272, 274 to 310, and 313 to 350; these read DHRG…CCAL, GHES…QVYR, GHTS…MSRE, GHRN…CHQT, GHTG…RVFR, HRGS…RTFT, HRRN…LRRV, and GHTF…GAPR.

This is WD repeat-containing protein 86 (WDR86) from Homo sapiens (Human).